Consider the following 225-residue polypeptide: Immune-associated nucleotide-binding protein 1 (225 aa).

One can recognise an AIG1-type G domain in the interval 6-214; sequence CPVTNLLLLG…YTENMHRKIK (209 aa). The G1 stretch occupies residues 15–22; the sequence is GRSENGKS. 15–23 serves as a coordination point for GTP; the sequence is GRSENGKSS. The interval 42–46 is G2; sequence DMDQR. Residues 64 to 67 are G3; the sequence is DTPG. Residues 134 to 137 are G4; that stretch reads TGGD. A G5 region spans residues 173–175; the sequence is NNK. N174 contributes to the GTP binding site.

This sequence belongs to the TRAFAC class TrmE-Era-EngA-EngB-Septin-like GTPase superfamily. AIG1/Toc34/Toc159-like paraseptin GTPase family. IAN subfamily. Mostly expressed in pollen.

This is Immune-associated nucleotide-binding protein 1 from Arabidopsis thaliana (Mouse-ear cress).